The sequence spans 78 residues: Acyl carrier protein (78 aa).

The 76-residue stretch at 2–77 (STIEERVKKI…AAIDYINGHQ (76 aa)) folds into the Carrier domain. O-(pantetheine 4'-phosphoryl)serine is present on S37.

This sequence belongs to the acyl carrier protein (ACP) family. 4'-phosphopantetheine is transferred from CoA to a specific serine of apo-ACP by AcpS. This modification is essential for activity because fatty acids are bound in thioester linkage to the sulfhydryl of the prosthetic group.

It localises to the cytoplasm. It participates in lipid metabolism; fatty acid biosynthesis. Carrier of the growing fatty acid chain in fatty acid biosynthesis. This Erwinia tasmaniensis (strain DSM 17950 / CFBP 7177 / CIP 109463 / NCPPB 4357 / Et1/99) protein is Acyl carrier protein.